A 155-amino-acid polypeptide reads, in one-letter code: Small ribosomal subunit protein bS6 (155 aa).

The interval 94–155 (VKQEGPLPTP…TPELEEQVKS (62 aa)) is disordered. A compositionally biased stretch (polar residues) spans 103–112 (PRSSNKSSNQ). The span at 113–141 (AEKKENENIDSANKSEPKADETDNKKKIT) shows a compositional bias: basic and acidic residues.

Belongs to the bacterial ribosomal protein bS6 family.

Binds together with bS18 to 16S ribosomal RNA. The sequence is that of Small ribosomal subunit protein bS6 from Prochlorococcus marinus (strain MIT 9515).